A 436-amino-acid chain; its full sequence is UDP-N-acetylmuramate--L-alanine ligase (436 aa).

108–114 (GAHGKTS) is an ATP binding site.

Belongs to the MurCDEF family.

The protein resides in the cytoplasm. It catalyses the reaction UDP-N-acetyl-alpha-D-muramate + L-alanine + ATP = UDP-N-acetyl-alpha-D-muramoyl-L-alanine + ADP + phosphate + H(+). It participates in cell wall biogenesis; peptidoglycan biosynthesis. In terms of biological role, cell wall formation. In Bacillus cereus (strain ZK / E33L), this protein is UDP-N-acetylmuramate--L-alanine ligase.